A 381-amino-acid chain; its full sequence is 1-deoxy-D-xylulose 5-phosphate reductoisomerase (381 aa).

NADPH is bound by residues glycine 13, serine 14, isoleucine 15, asparagine 40, and asparagine 114. Lysine 115 contributes to the 1-deoxy-D-xylulose 5-phosphate binding site. Glutamate 116 is a binding site for NADPH. Residue aspartate 140 participates in Mn(2+) binding. 1-deoxy-D-xylulose 5-phosphate-binding residues include serine 141, glutamate 142, serine 166, and histidine 189. Glutamate 142 contacts Mn(2+). Glycine 195 lines the NADPH pocket. Positions 202, 207, 208, and 211 each coordinate 1-deoxy-D-xylulose 5-phosphate. Mn(2+) is bound at residue glutamate 211.

Belongs to the DXR family. It depends on Mg(2+) as a cofactor. The cofactor is Mn(2+).

The enzyme catalyses 2-C-methyl-D-erythritol 4-phosphate + NADP(+) = 1-deoxy-D-xylulose 5-phosphate + NADPH + H(+). Its pathway is isoprenoid biosynthesis; isopentenyl diphosphate biosynthesis via DXP pathway; isopentenyl diphosphate from 1-deoxy-D-xylulose 5-phosphate: step 1/6. In terms of biological role, catalyzes the NADPH-dependent rearrangement and reduction of 1-deoxy-D-xylulose-5-phosphate (DXP) to 2-C-methyl-D-erythritol 4-phosphate (MEP). This is 1-deoxy-D-xylulose 5-phosphate reductoisomerase from Treponema denticola (strain ATCC 35405 / DSM 14222 / CIP 103919 / JCM 8153 / KCTC 15104).